A 75-amino-acid chain; its full sequence is Scuwaprin-a (75 aa).

A signal peptide spans 1–24 (MSSGGLLLLLGLLTLWAELTPVSG). Residues 27–72 (RPKKPGLCPPRPQKPPCVKECKNDWSCPGQQKCCSYGCIDECRDPI) enclose the WAP domain. Intrachain disulfides connect C34-C60, C43-C64, C47-C59, and C53-C68.

It belongs to the venom waprin family. Expressed by the venom gland.

The protein resides in the secreted. Its function is as follows. Damages membranes of susceptible bacteria. Has no hemolytic activity. Not toxic to mice. Does not inhibit the proteinases elastase and cathepsin G. The sequence is that of Scuwaprin-a from Oxyuranus scutellatus scutellatus (Australian taipan).